Reading from the N-terminus, the 161-residue chain is Peptidyl-prolyl cis-trans isomerase-like 1 (161 aa).

Positions 1 to 155 constitute a PPIase cyclophilin-type domain; sequence MATDVAFDTS…DEVKIIRARV (155 aa).

It belongs to the cyclophilin-type PPIase family. PPIL1 subfamily.

It carries out the reaction [protein]-peptidylproline (omega=180) = [protein]-peptidylproline (omega=0). PPIases accelerate the folding of proteins. It catalyzes the cis-trans isomerization of proline imidic peptide bonds in oligopeptides. The sequence is that of Peptidyl-prolyl cis-trans isomerase-like 1 (cyp1) from Aspergillus oryzae (strain ATCC 42149 / RIB 40) (Yellow koji mold).